The primary structure comprises 195 residues: Imidazoleglycerol-phosphate dehydratase (195 aa).

It belongs to the imidazoleglycerol-phosphate dehydratase family.

The protein resides in the cytoplasm. The catalysed reaction is D-erythro-1-(imidazol-4-yl)glycerol 3-phosphate = 3-(imidazol-4-yl)-2-oxopropyl phosphate + H2O. It participates in amino-acid biosynthesis; L-histidine biosynthesis; L-histidine from 5-phospho-alpha-D-ribose 1-diphosphate: step 6/9. The protein is Imidazoleglycerol-phosphate dehydratase of Methylorubrum extorquens (strain CM4 / NCIMB 13688) (Methylobacterium extorquens).